The following is a 111-amino-acid chain: Universal stress protein B (111 aa).

A run of 2 helical transmembrane segments spans residues 1–21 (MISTVALFWALFLVCVINMAR) and 90–110 (FILTSALCGLVIISLIGLMIW).

It belongs to the universal stress protein B family.

It is found in the cell inner membrane. This is Universal stress protein B from Cronobacter sakazakii (strain ATCC BAA-894) (Enterobacter sakazakii).